Here is a 417-residue protein sequence, read N- to C-terminus: UDP-N-acetylglucosamine 1-carboxyvinyltransferase (417 aa).

22 to 23 provides a ligand contact to phosphoenolpyruvate; that stretch reads KN. A UDP-N-acetyl-alpha-D-glucosamine-binding site is contributed by Arg93. The active-site Proton donor is Cys117. A 2-(S-cysteinyl)pyruvic acid O-phosphothioketal modification is found at Cys117. 2 residues coordinate UDP-N-acetyl-alpha-D-glucosamine: Asp304 and Ile326.

It belongs to the EPSP synthase family. MurA subfamily.

It is found in the cytoplasm. It carries out the reaction phosphoenolpyruvate + UDP-N-acetyl-alpha-D-glucosamine = UDP-N-acetyl-3-O-(1-carboxyvinyl)-alpha-D-glucosamine + phosphate. It functions in the pathway cell wall biogenesis; peptidoglycan biosynthesis. In terms of biological role, cell wall formation. Adds enolpyruvyl to UDP-N-acetylglucosamine. This is UDP-N-acetylglucosamine 1-carboxyvinyltransferase from Neisseria gonorrhoeae (strain ATCC 700825 / FA 1090).